A 106-amino-acid chain; its full sequence is Iron-sulfur cluster assembly protein CyaY (106 aa).

Belongs to the frataxin family.

Functionally, involved in iron-sulfur (Fe-S) cluster assembly. May act as a regulator of Fe-S biogenesis. The protein is Iron-sulfur cluster assembly protein CyaY of Salmonella typhimurium (strain LT2 / SGSC1412 / ATCC 700720).